We begin with the raw amino-acid sequence, 345 residues long: S-adenosylmethionine:tRNA ribosyltransferase-isomerase (345 aa).

It belongs to the QueA family. In terms of assembly, monomer.

Its subcellular location is the cytoplasm. It catalyses the reaction 7-aminomethyl-7-carbaguanosine(34) in tRNA + S-adenosyl-L-methionine = epoxyqueuosine(34) in tRNA + adenine + L-methionine + 2 H(+). It participates in tRNA modification; tRNA-queuosine biosynthesis. Transfers and isomerizes the ribose moiety from AdoMet to the 7-aminomethyl group of 7-deazaguanine (preQ1-tRNA) to give epoxyqueuosine (oQ-tRNA). In Acidiphilium cryptum (strain JF-5), this protein is S-adenosylmethionine:tRNA ribosyltransferase-isomerase.